We begin with the raw amino-acid sequence, 75 residues long: UPF0235 protein Ava_3894 (75 aa).

The disordered stretch occupies residues 1-32; it reads MQKKVKVKPNSKQQKIAEQDDGSLTVHLKSPP.

It belongs to the UPF0235 family.

This Trichormus variabilis (strain ATCC 29413 / PCC 7937) (Anabaena variabilis) protein is UPF0235 protein Ava_3894.